A 302-amino-acid chain; its full sequence is Calpain-1 catalytic subunit (302 aa).

Residues 1–114 are domain III; it reads RESGCSFVLA…KRAGTQELDD (114 aa). Residues 115 to 130 form a linker region; that stretch reads QIQANLPDEQVLSAEE. Residues 131–301 form a domain IV region; that stretch reads IDENFKALFR…LFKWLQLTMF (171 aa). EF-hand domains lie at 173–206, 203–238, and 268–302; these read FSME…NRIR, NRIR…AGFK, and VRLE…TMFA. Ca(2+) is bound by residues Asp186, Asp188, Asn190, Lys192, Glu197, Asp216, Asp218, Ser220, Ser222, and Glu227.

It belongs to the peptidase C2 family. In terms of assembly, forms a heterodimer with a small (regulatory) subunit CAPNS1. The cofactor is Ca(2+). Post-translationally, the N-terminus is blocked. Undergoes calcium-induced successive autoproteolytic cleavages that generate a membrane-bound 78 kDa active form and an intracellular 75 kDa active form. Calpastatin reduces with high efficiency the transition from 78 kDa to 75 kDa calpain forms. As to expression, ubiquitous.

It localises to the cytoplasm. Its subcellular location is the cell membrane. The catalysed reaction is Broad endopeptidase specificity.. With respect to regulation, activated by micromolar concentrations of calcium and inhibited by calpastatin. Functionally, calcium-regulated non-lysosomal thiol-protease which catalyzes limited proteolysis of substrates involved in cytoskeletal remodeling and signal transduction. Proteolytically cleaves CTBP1. Cleaves and activates caspase-7 (CASP7). In Oryctolagus cuniculus (Rabbit), this protein is Calpain-1 catalytic subunit.